The following is a 410-amino-acid chain: Class E basic helix-loop-helix protein 41 (410 aa).

Lys-31 is covalently cross-linked (Glycyl lysine isopeptide (Lys-Gly) (interchain with G-Cter in SUMO2)). The bHLH domain occupies 44–99; that stretch reads TYKLPHRLIEKKRRDRINECIAQLKDLLPEHLKLTTLGHLEKAVVLELTLKHLKAL. A Glycyl lysine isopeptide (Lys-Gly) (interchain with G-Cter in SUMO2) cross-link involves residue Lys-121. Positions 131 to 166 constitute an Orange domain; that stretch reads FHSGFQTCAKEVLQYLARFESWTPREPRCAQLVSHL. Disordered stretches follow at residues 209–251 and 371–410; these read IQRT…SAAP and EVAP…KDAP. Lys-240 is covalently cross-linked (Glycyl lysine isopeptide (Lys-Gly) (interchain with G-Cter in SUMO2)).

As to quaternary structure, homodimer. Heterodimer with BHLHE40/DEC1. Interacts with CIART. Interacts with BMAL1 and RXRA. Interacts with NR0B2 and HNF1A. Highly expressed in the caudate putamen, pineal gland, granular cell layer of the cerebellum, olfactory bulb, piriform cortex, hippocampus and hypothalamic nuclei. Moderately expressed in skeletal muscle, heart. Weakly expressed in lung.

The protein resides in the nucleus. Functionally, transcriptional repressor involved in the regulation of the circadian rhythm by negatively regulating the activity of the clock genes and clock-controlled genes. Acts as the negative limb of a novel autoregulatory feedback loop (DEC loop) which differs from the one formed by the PER and CRY transcriptional repressors (PER/CRY loop). Both these loops are interlocked as it represses the expression of PER1 and in turn is repressed by PER1/2 and CRY1/2. Represses the activity of the circadian transcriptional activator: CLOCK-BMAL1 heterodimer by competing for the binding to E-box elements (5'-CACGTG-3') found within the promoters of its target genes. Negatively regulates its own expression and the expression of DBP and BHLHE41/DEC2. Acts as a corepressor of RXR and the RXR-LXR heterodimers and represses the ligand-induced RXRA/B/G, NR1H3/LXRA, NR1H4 and VDR transactivation activity. Inhibits HNF1A-mediated transactivation of CYP1A2, CYP2E1 and CYP3A11. The sequence is that of Class E basic helix-loop-helix protein 41 (Bhlhb3) from Rattus norvegicus (Rat).